Consider the following 405-residue polypeptide: Argininosuccinate synthase (405 aa).

ATP is bound by residues 10–18 (AYSGGLDTS) and alanine 37. L-citrulline contacts are provided by tyrosine 88 and serine 93. Glycine 118 provides a ligand contact to ATP. Residues threonine 120, asparagine 124, and aspartate 125 each contribute to the L-aspartate site. Asparagine 124 serves as a coordination point for L-citrulline. Arginine 128, serine 179, serine 188, glutamate 264, and tyrosine 276 together coordinate L-citrulline.

It belongs to the argininosuccinate synthase family. Type 1 subfamily. In terms of assembly, homotetramer.

The protein localises to the cytoplasm. It catalyses the reaction L-citrulline + L-aspartate + ATP = 2-(N(omega)-L-arginino)succinate + AMP + diphosphate + H(+). It functions in the pathway amino-acid biosynthesis; L-arginine biosynthesis; L-arginine from L-ornithine and carbamoyl phosphate: step 2/3. The polypeptide is Argininosuccinate synthase (Stutzerimonas stutzeri (strain A1501) (Pseudomonas stutzeri)).